The chain runs to 420 residues: MAAITLLRSASLPGLSDALARDAAAVQHVCSSYLPNNKEKKRRWILCSLKYACLGVDPAPGEIARTSPVYSSLTVTPAGEAVISSEQKVYDVVLKQAALLKRHLRPQPHTIPIVPKDLDLPRNGLKQAYHRCGEICEEYAKTFYLGTMLMTEDRRRAIWAIYVWCRRTDELVDGPNASHITPSALDRWEKRLDDLFTGRPYDMLDAALSDTISKFPIDIQPFRDMIEGMRSDLRKTRYKNFDELYMYCYYVAGTVGLMSVPVMGIAPESKATTESVYSAALALGIANQLTNILRDVGEDARRGRIYLPQDELAEAGLSDEDIFNGVVTNKWRSFMKRQIKRARMFFEEAERGVTELSQASRWPVWASLLLYRQILDEIEANDYNNFTKRAYVGKAKKLLALPVAYGRSLLMPYSLRNSQK.

A chloroplast-targeting transit peptide spans 1 to 70 (MAAITLLRSA…GEIARTSPVY (70 aa)).

The protein belongs to the phytoene/squalene synthase family. Expressed in leaves. Highly expressed in developing leaves. Expressed at low levels in roots.

Its subcellular location is the plastid. The protein resides in the chloroplast membrane. It localises to the chloroplast. It is found in the plastoglobule. It carries out the reaction 2 (2E,6E,10E)-geranylgeranyl diphosphate = 15-cis-phytoene + 2 diphosphate. In terms of biological role, catalyzes the conversion of geranylgeranyl diphosphate to phytoene. Mediates the first committed step in carotenoid biosynthesis. The sequence is that of Phytoene synthase 1, chloroplastic from Oryza sativa subsp. japonica (Rice).